Reading from the N-terminus, the 212-residue chain is Ribosomal RNA small subunit methyltransferase G (212 aa).

Residues G80, L85, 131-132, and R146 contribute to the S-adenosyl-L-methionine site; that span reads AE.

It belongs to the methyltransferase superfamily. RNA methyltransferase RsmG family.

Its subcellular location is the cytoplasm. The catalysed reaction is guanosine(527) in 16S rRNA + S-adenosyl-L-methionine = N(7)-methylguanosine(527) in 16S rRNA + S-adenosyl-L-homocysteine. Functionally, specifically methylates the N7 position of guanine in position 527 of 16S rRNA. This is Ribosomal RNA small subunit methyltransferase G from Xanthomonas oryzae pv. oryzae (strain MAFF 311018).